The chain runs to 559 residues: Glypican-1 (559 aa).

The first 23 residues, 1 to 23, serve as a signal peptide directing secretion; that stretch reads MELRARGWWLLYAAAVLVACARG. Intrachain disulfides connect Cys32-Cys68, Cys62-Cys256, Cys69-Cys259, Cys191-Cys343, Cys246-Cys279, Cys268-Cys415, and Cys272-Cys401. Asn79 and Asn116 each carry an N-linked (GlcNAc...) asparagine glycan. Residues 478–539 are disordered; that stretch reads FQDASDDGSG…SAAAPTPPQA (62 aa). 3 O-linked (Xyl...) (heparan sulfate) serine glycosylation sites follow: Ser486, Ser488, and Ser490. Ser530 carries GPI-anchor amidated serine lipidation. The propeptide at 531–559 is removed in mature form; that stretch reads AAAPTPPQASPLLLLGLALALPAVAPRGR.

This sequence belongs to the glypican family. In terms of processing, S-nitrosylated in a Cu(2+)-dependent manner. Nitric acid (NO) is released from the nitrosylated cysteines by ascorbate or by some other reducing agent, in a Cu(2+) or Zn(2+) dependent manner. This free nitric oxide is then capable of cleaving the heparan sulfate side chains. N- and O-glycosylated. N-glycosylation is mainly of the complex type containing sialic acid. O-glycosylated with heparan sulfate. The heparan sulfate chains can be cleaved either by the action of heparanase or, degraded by a deaminative process that uses nitric oxide (NO) released from the S-nitrosylated cysteines. This process is triggered by ascorbate, or by some other reducing agent, in a Cu(2+)- or Zn(2+) dependent manner. Cu(2+) ions are provided by ceruloproteins such as APP, PRNP or CP which associate with GCP1 in intracellular compartments or lipid rafts. Post-translationally, shed from the cell surface probably by further cleavage.

It localises to the cell membrane. The protein localises to the endosome. Its subcellular location is the secreted. It is found in the extracellular space. Its function is as follows. Cell surface proteoglycan that bears heparan sulfate. Binds, via the heparan sulfate side chains, alpha-4 (V) collagen and participates in Schwann cell myelination. May act as a catalyst in increasing the rate of conversion of prion protein PRPN (C) to PRNP (Sc) via associating (via the heparan sulfate side chains) with both forms of PRPN, targeting them to lipid rafts and facilitating their interaction. Required for proper skeletal muscle differentiation by sequestering FGF2 in lipid rafts preventing its binding to receptors (FGFRs) and inhibiting the FGF-mediated signaling. In Bos taurus (Bovine), this protein is Glypican-1 (GPC1).